The following is a 393-amino-acid chain: Cytotoxic and regulatory T-cell molecule (393 aa).

An N-terminal signal peptide occupies residues 1-16 (MWWGALSLLFWVPVQA). In terms of domain architecture, Ig-like V-type spans 17–111 (AFLKMETVTV…SVKTKQVRVT (95 aa)). Topologically, residues 17–289 (AFLKMETVTV…HTGLARRKSG (273 aa)) are extracellular. 2 disulfides stabilise this stretch: cysteine 36–cysteine 96 and cysteine 139–cysteine 194. N-linked (GlcNAc...) asparagine glycans are attached at residues asparagine 85 and asparagine 176. An Ig-like C2-type domain is found at 119–208 (PTVEALVLRR…EGLHGRKLVA (90 aa)). A compositionally biased stretch (acidic residues) spans 218 to 228 (DQETSDQETSD). The tract at residues 218–280 (DQETSDQETS…GLSTEASAQH (63 aa)) is disordered. Residues 229 to 246 (APEQSSLSSQALQQPTST) show a composition bias toward low complexity. Positions 247–256 (VSMMENSSIP) are enriched in polar residues. The span at 257–267 (ETDKEEKEHAT) shows a compositional bias: basic and acidic residues. Positions 270-280 (PGLSTEASAQH) are enriched in polar residues. Residues 290 to 310 (ILLLTLVSFLIFILFIIVQLF) form a helical membrane-spanning segment. Topologically, residues 311–393 (IMKLRKAHVV…KHSRVPESIV (83 aa)) are cytoplasmic. Residues 333 to 356 (ESYRSRSNNEETSSQENSSQAPQS) are disordered. Residues 342 to 352 (EETSSQENSSQ) show a composition bias toward low complexity. A PDZ-binding motif is present at residues 390–393 (ESIV).

The protein belongs to the nectin family. Monomer. May form homodimer (via Ig-like V-type domain). Interacts (via Ig-like V-type domain) with CADM1 (via Ig-like V-type domain); the interaction competes with CRTAM homodimerization and CADM1 homodimerization. Interacts (via PDZ-binding motif) with SCRIB (via PDZ domain 3); the interaction promotes CRTAM and SCRIB polarization in a subset of CD4+ T-cells. In terms of tissue distribution, in the immune system, expression is restricted to activated class-I MHC-restricted cells, including NKT, NK and CD8+ T-cells (at protein level). Transiently expressed in activated CD8+ T-cells and a subset of activated CD4+ T-cells (at protein level). Expressed in activated intestinal T-cells, specifically intraepithelial CD4+ CD8+ T-cells, intraepithelial CD4+ T-cells and, CD8+ T-cells in the intestine epithelium, lamina propria, Peyer's Patches and mesenteric lymph nodes. Also expressed in spleen, brain and testis.

The protein resides in the cell membrane. In terms of biological role, mediates heterophilic cell-cell adhesion which regulates the activation, differentiation and tissue retention of various T-cell subsets. Interaction with CADM1 promotes natural killer (NK) cell cytotoxicity and IFNG/interferon-gamma secretion by CD8+ T-cells in vitro as well as NK cell-mediated rejection of tumors expressing CADM1 in vivo. Regulates CD8+ T-cell proliferation in response to T-cell receptor (TCR) activation. Appears to be dispensable for CD8+ T-cell-mediated cytotoxicity. Interaction with SCRIB promotes the late phase of cellular polarization of a subset of CD4+ T-cells, which in turn regulates TCR-mediated proliferation and IFNG, IL17 and IL22 production. By interacting with CADM1 on CD8+ dendritic cells, regulates the retention of activated CD8+ T-cells within the draining lymph node. Required for the intestinal retention of intraepithelial CD4+ CD8+ T-cells and, to a lesser extent, intraepithelial and lamina propria CD8+ T-cells and CD4+ T-cells. Interaction with CADM1 promotes the adhesion to gut-associated CD103+ dendritic cells, which may facilitate the expression of gut-homing and adhesion molecules on T-cells and the conversion of CD4+ T-cells into CD4+ CD8+ T-cells. In Mus musculus (Mouse), this protein is Cytotoxic and regulatory T-cell molecule.